A 313-amino-acid chain; its full sequence is RHOMBOID-like protein 7 (313 aa).

Acidic residues predominate over residues 1-11 (MLSTAAEEDPE). A disordered region spans residues 1–24 (MLSTAAEEDPEGGSRETNNGGETT). Polar residues predominate over residues 15 to 24 (RETNNGGETT). 7 helical membrane-spanning segments follow: residues 31–51 (SWII…VMYY), 112–132 (WLHA…YIGV), 143–163 (VGTI…LFLE), 166–186 (ISVG…SELL), 196–216 (GVAI…GTLP), 221–241 (FAHI…LIHP), and 269–289 (LCIV…VILF). S171 (nucleophile) is an active-site residue. The active-site Charge relay system is the H223.

The protein belongs to the peptidase S54 family.

The protein resides in the membrane. It catalyses the reaction Cleaves type-1 transmembrane domains using a catalytic dyad composed of serine and histidine that are contributed by different transmembrane domains.. In terms of biological role, probable rhomboid-type serine protease that catalyzes intramembrane proteolysis. May function in embryo development. The polypeptide is RHOMBOID-like protein 7 (Arabidopsis thaliana (Mouse-ear cress)).